The sequence spans 184 residues: MLIILKENIRTLGKLGEVVKVKPGYARNFLFPQRKAVKATKENLTKLEEQRLLLEEENIKRLNVAKELALSLHDKFVVLIKQASEDGKIFGSVTTREIAKILLQEGHVIDHRSLSFGGVSIKNLGEYQVNVELHSEVVVPITIYVVKSETDANELRQVKLQNQKSEQQEAEQDANKEATDGDDS.

A disordered region spans residues 160–184 (LQNQKSEQQEAEQDANKEATDGDDS). Positions 173 to 184 (DANKEATDGDDS) are enriched in basic and acidic residues.

It belongs to the bacterial ribosomal protein bL9 family.

Functionally, binds to the 23S rRNA. The polypeptide is Large ribosomal subunit protein bL9 (Wolbachia pipientis wMel).